Reading from the N-terminus, the 81-residue chain is MATSKSGGSSKNGRDSISKRLGVKRSGGQFVRAGEIIVRQRGTKFHKGKNSGLGRDYTIFALKDGIVEFKTYRGRKYINII.

Residues 1-11 (MATSKSGGSSK) show a composition bias toward polar residues. The segment at 1 to 21 (MATSKSGGSSKNGRDSISKRL) is disordered.

The protein belongs to the bacterial ribosomal protein bL27 family.

This chain is Large ribosomal subunit protein bL27, found in Borrelia hermsii (strain HS1 / DAH).